The following is a 66-amino-acid chain: Hemicalcin (66 aa).

The signal sequence occupies residues 1–21 (MRASLFIVIFVVSFITISCLS). A propeptide spanning residues 22-33 (TDDEEARWIEKR) is cleaved from the precursor. 3 cysteine pairs are disulfide-bonded: Cys-36–Cys-50, Cys-43–Cys-54, and Cys-49–Cys-65. The essential for stimulation of [3H]ryanodine binding to RYR1 stretch occupies residues 55–57 (KRR).

The protein belongs to the scorpion calcin family. As to expression, expressed by the venom gland.

The protein resides in the secreted. Functionally, this toxin stabilizes ryanodine receptor 1 (RyR1) opening in a long-lasting subconductance state (20% and 38% of the full conductance state have been found). It promotes an increase in the opening probability at intermediate concentration. Furthermore, it triggers calcium release from sarcoplasmic vesicles (68 nM are enough to induce a sharp release, and 45% of the total calcium is released after toxin (100 nM) addition) probably by acting as a cell-penetrating peptide (CPP). In addition, it has been shown to dose-dependently stimulate ryanodine binding to RyR1 (EC(50)=6.9-71 nM). It also augments the bell-shaped calcium-[3H]ryanodine binding curve that is maximal at about 10 uM calcium concentration. It binds a different site as ryanodine. It acts synergistically with caffeine. In vivo, intracerebroventricular injection into mice induces neurotoxic symptoms, followed by death. The polypeptide is Hemicalcin (Hemiscorpius lepturus (Scorpion)).